The primary structure comprises 50 residues: Protein PsbN (50 aa).

Residues 14–34 (VAVTILAVLLALTGFGLWTAF) traverse the membrane as a helical segment.

The protein belongs to the PsbN family.

It is found in the cellular thylakoid membrane. May play a role in photosystem I and II biogenesis. The sequence is that of Protein PsbN from Prochlorococcus marinus (strain MIT 9515).